The chain runs to 645 residues: 1,4-alpha-glucan branching enzyme GlgB (645 aa).

The active-site Nucleophile is the Asp309. The active-site Proton donor is the Glu352. The segment at 619–645 (VKTRKGSKKQDGSKTKVRSNVTSRGKR) is disordered. Residues 636 to 645 (RSNVTSRGKR) show a composition bias toward polar residues.

This sequence belongs to the glycosyl hydrolase 13 family. GlgB subfamily. In terms of assembly, monomer.

It carries out the reaction Transfers a segment of a (1-&gt;4)-alpha-D-glucan chain to a primary hydroxy group in a similar glucan chain.. The protein operates within glycan biosynthesis; glycogen biosynthesis. In terms of biological role, catalyzes the formation of the alpha-1,6-glucosidic linkages in glycogen by scission of a 1,4-alpha-linked oligosaccharide from growing alpha-1,4-glucan chains and the subsequent attachment of the oligosaccharide to the alpha-1,6 position. This chain is 1,4-alpha-glucan branching enzyme GlgB, found in Bacillus cereus (strain B4264).